A 131-amino-acid polypeptide reads, in one-letter code: MNSMVLELRKKMSSGPDCVIGRPPHILPPQKGVYLLTNISQLIGPVQQNDRGLWRHNGMHTQNLSHHFTGPFICAVIARPINKRTHIGIHVLNQNNELPAIFTIQYPEPPHLTDNPGAVRKSQKSLIPPYN.

Residues 112–131 are disordered; the sequence is LTDNPGAVRKSQKSLIPPYN.

This is an uncharacterized protein from Fowl adenovirus A serotype 1 (strain CELO / Phelps) (FAdV-1).